The chain runs to 215 residues: Cytochrome b6 (215 aa).

Residues 32–52 (IFYCLGGITLTCFLVQVATGF) traverse the membrane as a helical segment. Position 35 (cysteine 35) interacts with heme c. Positions 86 and 100 each coordinate heme b. Helical transmembrane passes span 90 to 110 (ASMM…TGGF), 116 to 136 (LTWV…VTGY), and 186 to 206 (LHTF…FLMI). Heme b contacts are provided by histidine 187 and histidine 202.

Belongs to the cytochrome b family. PetB subfamily. In terms of assembly, the 4 large subunits of the cytochrome b6-f complex are cytochrome b6, subunit IV (17 kDa polypeptide, PetD), cytochrome f and the Rieske protein, while the 4 small subunits are PetG, PetL, PetM and PetN. The complex functions as a dimer. The cofactor is heme b. Requires heme c as cofactor.

It is found in the plastid. It localises to the chloroplast thylakoid membrane. In terms of biological role, component of the cytochrome b6-f complex, which mediates electron transfer between photosystem II (PSII) and photosystem I (PSI), cyclic electron flow around PSI, and state transitions. The sequence is that of Cytochrome b6 from Gossypium barbadense (Sea Island cotton).